We begin with the raw amino-acid sequence, 862 residues long: Protein SEY1 (862 aa).

Residues 1-743 are Cytoplasmic-facing; it reads MASNGHFSSV…KRSAIGGITQ (743 aa). One can recognise a GB1/RHD3-type G domain in the interval 48-301; that stretch reads GFNYHLISVF…IPADGFAVYA (254 aa). 58–65 lines the GTP pocket; the sequence is GSQSTGKS. Positions 476-500 form a coiled coil; sequence SDYKQELSLFQKDLEKISSQLRKDE. The helical transmembrane segment at 744–764 threads the bilayer; the sequence is VPLYFYGLLLALGWNEIIAVL. Over 765–767 the chain is Lumenal; it reads RNP. The chain crosses the membrane as a helical span at residues 768–788; it reads IYFIFLLLIGVGAYVTFRLNL. Residues 789 to 862 lie on the Cytoplasmic side of the membrane; it reads WGPMINMAEA…TSDDDNDDDL (74 aa). The tract at residues 818-862 is disordered; it reads SDSGRQAMAMSGRNARGTEEYEMSSNLKSKGRRTDTSDDDNDDDL.

Belongs to the TRAFAC class dynamin-like GTPase superfamily. GB1/RHD3 GTPase family. RHD3 subfamily.

The protein localises to the endoplasmic reticulum membrane. In terms of biological role, cooperates with the reticulon proteins and tubule-shaping DP1 family proteins to generate and maintain the structure of the tubular endoplasmic reticulum network. Has GTPase activity, which is required for its function in ER organization. The chain is Protein SEY1 from Arthroderma otae (strain ATCC MYA-4605 / CBS 113480) (Microsporum canis).